Consider the following 110-residue polypeptide: Small ubiquitin-related modifier 3 (110 aa).

Residues Lys-5 and Lys-7 each participate in a glycyl lysine isopeptide (Lys-Gly) (interchain with G-Cter in SUMO2) cross-link. Lys-11 is covalently cross-linked (Glycyl lysine isopeptide (Lys-Gly) (interchain with G-Cter in SUMO); alternate). A Glycyl lysine isopeptide (Lys-Gly) (interchain with G-Cter in SUMO2); alternate cross-link involves residue Lys-11. The 78-residue stretch at 15–92 (DHINLKVAGQ…IDVFQQQTGG (78 aa)) folds into the Ubiquitin-like domain. Positions 89–101 (QTGGTASRASVPT) are enriched in polar residues. The segment at 89-110 (QTGGTASRASVPTPSHFPDICY) is disordered. A Glycyl lysine isopeptide (Gly-Lys) (interchain with K-? in acceptor proteins) cross-link involves residue Gly-92. The propeptide occupies 93-110 (TASRASVPTPSHFPDICY).

Belongs to the ubiquitin family. SUMO subfamily. Interacts with SAE2 and UBE2I. Covalently attached to a number of proteins. Interacts with USP25 (via ts SIM domain); the interaction sumoylates USP25 and inhibits its ubiquitin hydrolyzing activity. Interacts with BMAL1. Polymeric chains can be formed through Lys-11 cross-linking. Post-translationally, cleavage of precursor form by SENP1, SENP2 or SENP5 is necessary for function.

Its subcellular location is the cytoplasm. The protein resides in the nucleus. The protein localises to the PML body. In terms of biological role, ubiquitin-like protein which can be covalently attached to target lysines either as a monomer or as a lysine-linked polymer. Does not seem to be involved in protein degradation and may function as an antagonist of ubiquitin in the degradation process. Plays a role in a number of cellular processes such as nuclear transport, DNA replication and repair, mitosis and signal transduction. Covalent attachment to its substrates requires prior activation by the E1 complex SAE1-SAE2 and linkage to the E2 enzyme UBE2I, and can be promoted by an E3 ligase such as PIAS1-4, RANBP2 or CBX4. Plays a role in the regulation of sumoylation status of SETX. This is Small ubiquitin-related modifier 3 (Sumo3) from Rattus norvegicus (Rat).